The primary structure comprises 123 residues: Small ribosomal subunit protein uS12 (123 aa).

The residue at position 89 (aspartate 89) is a 3-methylthioaspartic acid.

Belongs to the universal ribosomal protein uS12 family. As to quaternary structure, part of the 30S ribosomal subunit. Contacts proteins S8 and S17. May interact with IF1 in the 30S initiation complex.

Its function is as follows. With S4 and S5 plays an important role in translational accuracy. Interacts with and stabilizes bases of the 16S rRNA that are involved in tRNA selection in the A site and with the mRNA backbone. Located at the interface of the 30S and 50S subunits, it traverses the body of the 30S subunit contacting proteins on the other side and probably holding the rRNA structure together. The combined cluster of proteins S8, S12 and S17 appears to hold together the shoulder and platform of the 30S subunit. This is Small ribosomal subunit protein uS12 from Nitrobacter winogradskyi (strain ATCC 25391 / DSM 10237 / CIP 104748 / NCIMB 11846 / Nb-255).